Consider the following 653-residue polypeptide: Choline transporter-like protein 3 (653 aa).

Residues 34–54 (WLFLFFLFWTGLVFIMGYSVV) traverse the membrane as a helical segment. 2 N-linked (GlcNAc...) asparagine glycosylation sites follow: Asn-136 and Asn-151. The next 5 membrane-spanning stretches (helical) occupy residues 213-233 (DTILGLCILALALSLAMMFTF), 243-263 (IFISLVILGLLFVCGVLWWLY), 284-304 (VLGFAIVSTGITAVLLVLIFV), 334-354 (LWTFAILIFFWVLWVAVLLSL), and 384-404 (LIGLIWTSEFILACQQMTIAG). N-linked (GlcNAc...) asparagine glycans are attached at residues Asn-412, Asn-503, and Asn-521. 2 helical membrane-spanning segments follow: residues 534–554 (FIIFLGKVLVVCFTVFGGLMA) and 563–583 (VWAVPLLLVAFFAYLVAHSFL). The disordered stretch occupies residues 632–653 (RAQQDKHSLRNEEGTELQAIVR). Positions 634 to 644 (QQDKHSLRNEE) are enriched in basic and acidic residues.

This sequence belongs to the CTL (choline transporter-like) family.

Its subcellular location is the membrane. This chain is Choline transporter-like protein 3 (SLC44A3), found in Homo sapiens (Human).